Here is a 259-residue protein sequence, read N- to C-terminus: Taurine import ATP-binding protein TauB (259 aa).

Residues 4–233 form the ABC transporter domain; sequence LELERISAQY…RYAAGESARA (230 aa). 38 to 45 provides a ligand contact to ATP; it reads GPSGSGKT.

It belongs to the ABC transporter superfamily. Taurine importer (TC 3.A.1.17.1) family. In terms of assembly, the complex is composed of two ATP-binding proteins (TauB), two transmembrane proteins (TauC) and a solute-binding protein (TauA).

Its subcellular location is the cell inner membrane. It carries out the reaction taurine(out) + ATP + H2O = taurine(in) + ADP + phosphate + H(+). Part of the ABC transporter complex TauABC involved in taurine import. Responsible for energy coupling to the transport system. The chain is Taurine import ATP-binding protein TauB from Pseudomonas entomophila (strain L48).